The sequence spans 921 residues: Sodium/calcium exchanger 2 (921 aa).

Residues M1–G20 form the signal peptide. Residues T23–G42 form a disordered region. A helical membrane pass occupies residues V69–I89. N-linked (GlcNAc...) asparagine glycosylation is found at N125 and N130. 4 consecutive transmembrane segments (helical) span residues L131–C151, I165–P185, V197–A217, and V226–A246. The segment at K248–G267 is putative calmodulin-binding region. A disordered region spans residues H371–D391. Calx-beta domains follow at residues E389–L482 and A512–L611. Residues E407, D443, D468, D469, I471, E473, E476, D518, D519, D520, E536, D598, E599, and E600 each coordinate Ca(2+). Phosphoserine is present on S622. E665 is a binding site for Ca(2+). Transmembrane regions (helical) follow at residues C721–P741, W749–L769, V786–L806, A823–V843, L855–Y875, and L893–E913.

Belongs to the Ca(2+):cation antiporter (CaCA) (TC 2.A.19) family. SLC8 subfamily. As to expression, detected in kidney cortex, in distal convoluted tubules and connecting segments. Detected in brain and spinal cord (at protein level). Detected in brain, especially in hippocampus CA1, CA2 and CA3 fiels, dentate gyrus, cerebellum and brain cortex.

The protein resides in the cell membrane. Its subcellular location is the basolateral cell membrane. The enzyme catalyses Ca(2+)(in) + 3 Na(+)(out) = Ca(2+)(out) + 3 Na(+)(in). Its activity is regulated as follows. Calcium transport is down-regulated by Na(+) and stimulated by Ca(2+). Functionally, mediates the electrogenic exchange of Ca(2+) against Na(+) ions across the cell membrane, and thereby contributes to the regulation of cytoplasmic Ca(2+) levels and Ca(2+)-dependent cellular processes. Contributes to cellular Ca(2+) homeostasis in excitable cells. Contributes to the rapid decrease of cytoplasmic Ca(2+) levels back to baseline after neuronal activation, and thereby contributes to modulate synaptic plasticity, learning and memory. Plays a role in regulating urinary Ca(2+) and Na(+) excretion. This is Sodium/calcium exchanger 2 from Mus musculus (Mouse).